The primary structure comprises 385 residues: Succinate--CoA ligase [ADP-forming] subunit beta (385 aa).

An ATP-grasp domain is found at 9–244 (KALFRTFGVP…LDEEDPLEVE (236 aa)). Residues Lys46, 53–55 (GRG), Glu99, Gln102, and Glu107 contribute to the ATP site. Positions 199 and 213 each coordinate Mg(2+). Substrate is bound by residues Asn264 and 321–323 (GIL).

Belongs to the succinate/malate CoA ligase beta subunit family. As to quaternary structure, heterotetramer of two alpha and two beta subunits. It depends on Mg(2+) as a cofactor.

The catalysed reaction is succinate + ATP + CoA = succinyl-CoA + ADP + phosphate. It carries out the reaction GTP + succinate + CoA = succinyl-CoA + GDP + phosphate. It functions in the pathway carbohydrate metabolism; tricarboxylic acid cycle; succinate from succinyl-CoA (ligase route): step 1/1. In terms of biological role, succinyl-CoA synthetase functions in the citric acid cycle (TCA), coupling the hydrolysis of succinyl-CoA to the synthesis of either ATP or GTP and thus represents the only step of substrate-level phosphorylation in the TCA. The beta subunit provides nucleotide specificity of the enzyme and binds the substrate succinate, while the binding sites for coenzyme A and phosphate are found in the alpha subunit. This Desulforapulum autotrophicum (strain ATCC 43914 / DSM 3382 / VKM B-1955 / HRM2) (Desulfobacterium autotrophicum) protein is Succinate--CoA ligase [ADP-forming] subunit beta.